A 594-amino-acid polypeptide reads, in one-letter code: UvrABC system protein C (594 aa).

The GIY-YIG domain occupies 13-99 (NSSGVYQYFD…IKQLKPKYNI (87 aa)). The region spanning 205–240 (DRLIKELELKMERLSSKLRFEEALIYRDRIAKIQKI) is the UVR domain.

It belongs to the UvrC family. Interacts with UvrB in an incision complex.

It is found in the cytoplasm. The UvrABC repair system catalyzes the recognition and processing of DNA lesions. UvrC both incises the 5' and 3' sides of the lesion. The N-terminal half is responsible for the 3' incision and the C-terminal half is responsible for the 5' incision. This Helicobacter pylori (strain P12) protein is UvrABC system protein C.